Reading from the N-terminus, the 150-residue chain is D-aminoacyl-tRNA deacylase (150 aa).

The Gly-cisPro motif, important for rejection of L-amino acids motif lies at 140-141 (GP).

This sequence belongs to the DTD family. As to quaternary structure, homodimer.

It localises to the cytoplasm. It carries out the reaction glycyl-tRNA(Ala) + H2O = tRNA(Ala) + glycine + H(+). The catalysed reaction is a D-aminoacyl-tRNA + H2O = a tRNA + a D-alpha-amino acid + H(+). An aminoacyl-tRNA editing enzyme that deacylates mischarged D-aminoacyl-tRNAs. Also deacylates mischarged glycyl-tRNA(Ala), protecting cells against glycine mischarging by AlaRS. Acts via tRNA-based rather than protein-based catalysis; rejects L-amino acids rather than detecting D-amino acids in the active site. By recycling D-aminoacyl-tRNA to D-amino acids and free tRNA molecules, this enzyme counteracts the toxicity associated with the formation of D-aminoacyl-tRNA entities in vivo and helps enforce protein L-homochirality. This chain is D-aminoacyl-tRNA deacylase (DTD1), found in Kluyveromyces lactis (strain ATCC 8585 / CBS 2359 / DSM 70799 / NBRC 1267 / NRRL Y-1140 / WM37) (Yeast).